The following is a 206-amino-acid chain: MTDTPTKQEIQSKNDNVPAATPVEQKKNNRNDRKRNRRGDSKNLERDSDWQERVVQIRRVSKTVKGGKKMSFRAIVVVGNEKGQVGVGVGKAGDVIGAVRKGVSDGKKNLVRVPLTPNNSIPTLSLGSDGAANVLIRPAAPGTGVIAGGSIRTVLELAGIKNVLAKRLGSKTPLNNARAAMVALSQLRTHKSVSRERGISLEQLYS.

A compositionally biased stretch (polar residues) spans 1–15 (MTDTPTKQEIQSKND). The interval 1 to 50 (MTDTPTKQEIQSKNDNVPAATPVEQKKNNRNDRKRNRRGDSKNLERDSDW) is disordered. Basic and acidic residues predominate over residues 38–50 (RGDSKNLERDSDW). The 64-residue stretch at 50-113 (WQERVVQIRR…SDGKKNLVRV (64 aa)) folds into the S5 DRBM domain.

This sequence belongs to the universal ribosomal protein uS5 family. Part of the 30S ribosomal subunit. Contacts proteins S4 and S8.

Its function is as follows. With S4 and S12 plays an important role in translational accuracy. Functionally, located at the back of the 30S subunit body where it stabilizes the conformation of the head with respect to the body. The polypeptide is Small ribosomal subunit protein uS5 (Prochlorococcus marinus (strain AS9601)).